Consider the following 254-residue polypeptide: 3-deoxy-manno-octulosonate cytidylyltransferase (254 aa).

Belongs to the KdsB family.

Its subcellular location is the cytoplasm. It catalyses the reaction 3-deoxy-alpha-D-manno-oct-2-ulosonate + CTP = CMP-3-deoxy-beta-D-manno-octulosonate + diphosphate. Its pathway is nucleotide-sugar biosynthesis; CMP-3-deoxy-D-manno-octulosonate biosynthesis; CMP-3-deoxy-D-manno-octulosonate from 3-deoxy-D-manno-octulosonate and CTP: step 1/1. It functions in the pathway bacterial outer membrane biogenesis; lipopolysaccharide biosynthesis. Activates KDO (a required 8-carbon sugar) for incorporation into bacterial lipopolysaccharide in Gram-negative bacteria. This chain is 3-deoxy-manno-octulosonate cytidylyltransferase, found in Bordetella bronchiseptica (strain ATCC BAA-588 / NCTC 13252 / RB50) (Alcaligenes bronchisepticus).